A 232-amino-acid chain; its full sequence is 5'-methylthioadenosine/S-adenosylhomocysteine nucleosidase (232 aa).

The active-site Proton acceptor is the E12. Substrate-binding positions include G78, V152, and M173–E174. D197 (proton donor) is an active-site residue.

It belongs to the PNP/UDP phosphorylase family. MtnN subfamily. In terms of assembly, homodimer.

The catalysed reaction is S-adenosyl-L-homocysteine + H2O = S-(5-deoxy-D-ribos-5-yl)-L-homocysteine + adenine. It carries out the reaction S-methyl-5'-thioadenosine + H2O = 5-(methylsulfanyl)-D-ribose + adenine. The enzyme catalyses 5'-deoxyadenosine + H2O = 5-deoxy-D-ribose + adenine. The protein operates within amino-acid biosynthesis; L-methionine biosynthesis via salvage pathway; S-methyl-5-thio-alpha-D-ribose 1-phosphate from S-methyl-5'-thioadenosine (hydrolase route): step 1/2. Functionally, catalyzes the irreversible cleavage of the glycosidic bond in both 5'-methylthioadenosine (MTA) and S-adenosylhomocysteine (SAH/AdoHcy) to adenine and the corresponding thioribose, 5'-methylthioribose and S-ribosylhomocysteine, respectively. Also cleaves 5'-deoxyadenosine, a toxic by-product of radical S-adenosylmethionine (SAM) enzymes, into 5-deoxyribose and adenine. Thus, is required for in vivo function of the radical SAM enzymes biotin synthase and lipoic acid synthase, that are inhibited by 5'-deoxyadenosine accumulation. The chain is 5'-methylthioadenosine/S-adenosylhomocysteine nucleosidase from Buchnera aphidicola subsp. Acyrthosiphon pisum (strain 5A).